The following is a 1150-amino-acid chain: uncharacterized protein (1150 aa).

This sequence belongs to the TMEM1 family.

This is an uncharacterized protein from Schizosaccharomyces pombe (strain 972 / ATCC 24843) (Fission yeast).